The following is a 370-amino-acid chain: Chloromuconate cycloisomerase (370 aa).

Catalysis depends on Lys-165, which acts as the Proton acceptor. Mn(2+) contacts are provided by Asp-194, Glu-220, and Asp-245. Glu-323 (proton donor) is an active-site residue.

Belongs to the mandelate racemase/muconate lactonizing enzyme family. Requires Mn(2+) as cofactor.

The catalysed reaction is 2-[(2R)-2-chloro-2,5-dihydro-5-oxofuryl]acetate = 3-chloro-cis,cis-muconate + H(+). It functions in the pathway aromatic compound metabolism; 3-chlorocatechol degradation. The chain is Chloromuconate cycloisomerase (tcbD) from Pseudomonas sp. (strain P51).